The primary structure comprises 457 residues: Bifunctional protein GlmU (457 aa).

Residues Met1–Leu230 form a pyrophosphorylase region. UDP-N-acetyl-alpha-D-glucosamine-binding positions include Leu12–Gly15, Lys26, Gln78, Gly83–Thr84, Tyr105–Asp107, Gly140, Glu155, Asn170, and Asn228. Asp107 is a Mg(2+) binding site. Residue Asn228 coordinates Mg(2+). Residues Trp231–Gln251 are linker. The segment at Gly252 to Thr457 is N-acetyltransferase. Residues Arg334 and Lys352 each coordinate UDP-N-acetyl-alpha-D-glucosamine. The active-site Proton acceptor is His364. The UDP-N-acetyl-alpha-D-glucosamine site is built by Tyr367 and Asn378. Residues Ala381, Asn387–Tyr388, Ser406, Ala424, and Arg441 each bind acetyl-CoA.

This sequence in the N-terminal section; belongs to the N-acetylglucosamine-1-phosphate uridyltransferase family. In the C-terminal section; belongs to the transferase hexapeptide repeat family. In terms of assembly, homotrimer. The cofactor is Mg(2+).

Its subcellular location is the cytoplasm. The enzyme catalyses alpha-D-glucosamine 1-phosphate + acetyl-CoA = N-acetyl-alpha-D-glucosamine 1-phosphate + CoA + H(+). It carries out the reaction N-acetyl-alpha-D-glucosamine 1-phosphate + UTP + H(+) = UDP-N-acetyl-alpha-D-glucosamine + diphosphate. The protein operates within nucleotide-sugar biosynthesis; UDP-N-acetyl-alpha-D-glucosamine biosynthesis; N-acetyl-alpha-D-glucosamine 1-phosphate from alpha-D-glucosamine 6-phosphate (route II): step 2/2. Its pathway is nucleotide-sugar biosynthesis; UDP-N-acetyl-alpha-D-glucosamine biosynthesis; UDP-N-acetyl-alpha-D-glucosamine from N-acetyl-alpha-D-glucosamine 1-phosphate: step 1/1. It functions in the pathway bacterial outer membrane biogenesis; LPS lipid A biosynthesis. Its function is as follows. Catalyzes the last two sequential reactions in the de novo biosynthetic pathway for UDP-N-acetylglucosamine (UDP-GlcNAc). The C-terminal domain catalyzes the transfer of acetyl group from acetyl coenzyme A to glucosamine-1-phosphate (GlcN-1-P) to produce N-acetylglucosamine-1-phosphate (GlcNAc-1-P), which is converted into UDP-GlcNAc by the transfer of uridine 5-monophosphate (from uridine 5-triphosphate), a reaction catalyzed by the N-terminal domain. The chain is Bifunctional protein GlmU from Xylella fastidiosa (strain 9a5c).